Consider the following 201-residue polypeptide: Adenylyl-sulfate kinase (201 aa).

Residue 35-42 coordinates ATP; sequence GLSGSGKS. Catalysis depends on Ser109, which acts as the Phosphoserine intermediate.

It belongs to the APS kinase family.

It carries out the reaction adenosine 5'-phosphosulfate + ATP = 3'-phosphoadenylyl sulfate + ADP + H(+). The protein operates within sulfur metabolism; hydrogen sulfide biosynthesis; sulfite from sulfate: step 2/3. Functionally, catalyzes the synthesis of activated sulfate. The chain is Adenylyl-sulfate kinase from Klebsiella pneumoniae (strain 342).